A 321-amino-acid chain; its full sequence is uncharacterized protein (321 aa).

This is an uncharacterized protein from Archaeoglobus fulgidus (strain ATCC 49558 / DSM 4304 / JCM 9628 / NBRC 100126 / VC-16).